Consider the following 555-residue polypeptide: Glutamate--tRNA ligase (555 aa).

Positions 100-110 (PNPSGPLHIGH) match the 'HIGH' region motif.

The protein belongs to the class-I aminoacyl-tRNA synthetase family. Glutamate--tRNA ligase type 2 subfamily.

Its subcellular location is the cytoplasm. The enzyme catalyses tRNA(Glu) + L-glutamate + ATP = L-glutamyl-tRNA(Glu) + AMP + diphosphate. In terms of biological role, catalyzes the attachment of glutamate to tRNA(Glu) in a two-step reaction: glutamate is first activated by ATP to form Glu-AMP and then transferred to the acceptor end of tRNA(Glu). The sequence is that of Glutamate--tRNA ligase from Methanococcus maripaludis (strain C7 / ATCC BAA-1331).